A 486-amino-acid chain; its full sequence is Maintenance of mitochondrial morphology protein 1 (486 aa).

At 1–20 (MNFQQSAIPPFSFLLSFTQG) the chain is on the lumenal side. A helical transmembrane segment spans residues 21-41 (FLLGQLSVVLLIGAFIKFFIF). At 42 to 486 (GEAPPPPSRG…GSLPDGAVGN (445 aa)) the chain is on the cytoplasmic side. 3 disordered regions span residues 70 to 96 (TNEA…SSST), 271 to 320 (TPPL…SPKS), and 387 to 486 (RTGV…AVGN). Residues 83–96 (STSNVLRPVPSSST) show a composition bias toward polar residues. The SMP-LTD domain occupies 128–379 (QPESLDWFNV…EPRVQVVGLP (252 aa)). Pro residues predominate over residues 271–282 (TPPLHTPSPSPA). Low complexity predominate over residues 292–306 (QSQPENNSSNPNQQS). 2 stretches are compositionally biased toward polar residues: residues 398 to 407 (TGSNAASRSA) and 440 to 450 (DSVSRSSSFNV). Positions 460–474 (MTREDSRGAISDDFH) are enriched in basic and acidic residues.

Belongs to the MMM1 family. Homodimer. Component of the ER-mitochondria encounter structure (ERMES) or MDM complex, composed of mmm1, mdm10, mdm12 and mdm34. A mmm1 homodimer associates with one molecule of mdm12 on each side in a pairwise head-to-tail manner, and the SMP-LTD domains of mmm1 and mdm12 generate a continuous hydrophobic tunnel for phospholipid trafficking.

Its subcellular location is the endoplasmic reticulum membrane. Its function is as follows. Component of the ERMES/MDM complex, which serves as a molecular tether to connect the endoplasmic reticulum (ER) and mitochondria. Components of this complex are involved in the control of mitochondrial shape and protein biogenesis, and function in nonvesicular lipid trafficking between the ER and mitochondria. The mdm12-mmm1 subcomplex functions in the major beta-barrel assembly pathway that is responsible for biogenesis of all outer membrane beta-barrel proteins, and acts in a late step after the SAM complex. The mdm10-mdm12-mmm1 subcomplex further acts in the TOM40-specific pathway after the action of the mdm12-mmm1 complex. Essential for establishing and maintaining the structure of mitochondria and maintenance of mtDNA nucleoids. The chain is Maintenance of mitochondrial morphology protein 1 from Aspergillus terreus (strain NIH 2624 / FGSC A1156).